The chain runs to 201 residues: Musculin (201 aa).

Disordered regions lie at residues 1 to 108 (MSTG…NAAN) and 182 to 201 (RPDS…GTSA). Positions 46 to 56 (SAEEEDGEEEP) are enriched in acidic residues. Positions 66–71 (KRKRLR) match the Nuclear localization signal motif. The segment covering 74–86 (DAGGAGGRAGGAG) has biased composition (gly residues). The 53-residue stretch at 102–154 (SQRNAANARERARMRVLSKAFSRLKTSLPWVPPDTKLSKLDTLRLASSYIAHL) folds into the bHLH domain.

Efficient DNA binding requires dimerization with another bHLH protein. Binds DNA as a homodimer or a heterodimer. Forms a heterodimer with TCF3.

The protein resides in the nucleus. Transcription repressor that blocks myogenesis and activation of E-box dependent muscle genes. The polypeptide is Musculin (Msc) (Mus musculus (Mouse)).